The sequence spans 1579 residues: Pentafunctional AROM polypeptide (1579 aa).

The segment at 1–391 (MKVELSKVPI…YGTSAHVVSD (391 aa)) is 3-dehydroquinate synthase. NAD(+) is bound by residues 44–46 (DTN), 79–82 (EAHK), 110–112 (GGV), and aspartate 115. Arginine 126 is a binding site for 7-phospho-2-dehydro-3-deoxy-D-arabino-heptonate. 135 to 136 (TS) contributes to the NAD(+) binding site. 2 residues coordinate 7-phospho-2-dehydro-3-deoxy-D-arabino-heptonate: aspartate 142 and lysine 148. Position 157 (lysine 157) interacts with NAD(+). 7-phospho-2-dehydro-3-deoxy-D-arabino-heptonate is bound at residue asparagine 158. NAD(+) contacts are provided by residues 175 to 178 (WLET) and asparagine 186. Glutamate 190 contributes to the Zn(2+) binding site. 7-phospho-2-dehydro-3-deoxy-D-arabino-heptonate-binding positions include 190-193 (EVIK) and lysine 257. Glutamate 267 acts as the Proton acceptor; for 3-dehydroquinate synthase activity in catalysis. 7-phospho-2-dehydro-3-deoxy-D-arabino-heptonate contacts are provided by residues 271-275 (RNLLN) and histidine 278. Histidine 278 contributes to the Zn(2+) binding site. Histidine 282 acts as the Proton acceptor; for 3-dehydroquinate synthase activity in catalysis. 2 residues coordinate 7-phospho-2-dehydro-3-deoxy-D-arabino-heptonate: histidine 294 and lysine 363. Residue histidine 294 coordinates Zn(2+). The segment at 404–862 (VYPFKTLENG…WDVLHTQLGA (459 aa)) is EPSP synthase. The active-site For EPSP synthase activity is cysteine 844. The interval 881-1070 (SIVIIGMRAA…IPTNRSSFVC (190 aa)) is shikimate kinase. Residue 886–893 (GMRAAGKT) coordinates ATP. The interval 1071–1283 (LTFDDLAAHK…SAPGQLTLSQ (213 aa)) is 3-dehydroquinase. Histidine 1188 acts as the Proton acceptor; for 3-dehydroquinate dehydratase activity in catalysis. Lysine 1217 acts as the Schiff-base intermediate with substrate; for 3-dehydroquinate dehydratase activity in catalysis. The interval 1296–1579 (AKNFYVVGSP…IYSAVTEEQA (284 aa)) is shikimate dehydrogenase.

The protein in the N-terminal section; belongs to the sugar phosphate cyclases superfamily. Dehydroquinate synthase family. It in the 2nd section; belongs to the EPSP synthase family. This sequence in the 3rd section; belongs to the shikimate kinase family. In the 4th section; belongs to the type-I 3-dehydroquinase family. The protein in the C-terminal section; belongs to the shikimate dehydrogenase family. As to quaternary structure, homodimer. The cofactor is Zn(2+).

Its subcellular location is the cytoplasm. The catalysed reaction is 7-phospho-2-dehydro-3-deoxy-D-arabino-heptonate = 3-dehydroquinate + phosphate. It catalyses the reaction 3-dehydroquinate = 3-dehydroshikimate + H2O. It carries out the reaction shikimate + NADP(+) = 3-dehydroshikimate + NADPH + H(+). The enzyme catalyses shikimate + ATP = 3-phosphoshikimate + ADP + H(+). The catalysed reaction is 3-phosphoshikimate + phosphoenolpyruvate = 5-O-(1-carboxyvinyl)-3-phosphoshikimate + phosphate. It participates in metabolic intermediate biosynthesis; chorismate biosynthesis; chorismate from D-erythrose 4-phosphate and phosphoenolpyruvate: step 2/7. It functions in the pathway metabolic intermediate biosynthesis; chorismate biosynthesis; chorismate from D-erythrose 4-phosphate and phosphoenolpyruvate: step 3/7. The protein operates within metabolic intermediate biosynthesis; chorismate biosynthesis; chorismate from D-erythrose 4-phosphate and phosphoenolpyruvate: step 4/7. Its pathway is metabolic intermediate biosynthesis; chorismate biosynthesis; chorismate from D-erythrose 4-phosphate and phosphoenolpyruvate: step 5/7. It participates in metabolic intermediate biosynthesis; chorismate biosynthesis; chorismate from D-erythrose 4-phosphate and phosphoenolpyruvate: step 6/7. The AROM polypeptide catalyzes 5 consecutive enzymatic reactions in prechorismate polyaromatic amino acid biosynthesis. The chain is Pentafunctional AROM polypeptide from Lachancea thermotolerans (strain ATCC 56472 / CBS 6340 / NRRL Y-8284) (Yeast).